A 391-amino-acid polypeptide reads, in one-letter code: Probable dual-specificity RNA methyltransferase RlmN (391 aa).

The tract at residues 1 to 33 is disordered; that stretch reads MTTPLDTPTREPLPLAPAGPGKLVMSAPRRGKP. Residues 12 to 21 are compositionally biased toward low complexity; it reads PLPLAPAGPG. Residue glutamate 124 is the Proton acceptor of the active site. In terms of domain architecture, Radical SAM core spans 130 to 373; it reads YKNRDTICIS…TTVRDTRGSD (244 aa). Cysteines 137 and 378 form a disulfide. Cysteine 144, cysteine 148, and cysteine 151 together coordinate [4Fe-4S] cluster. Residues 199–200, serine 233, 256–258, and asparagine 335 contribute to the S-adenosyl-L-methionine site; these read GE and SLH. Cysteine 378 serves as the catalytic S-methylcysteine intermediate.

This sequence belongs to the radical SAM superfamily. RlmN family. [4Fe-4S] cluster is required as a cofactor.

It localises to the cytoplasm. It carries out the reaction adenosine(2503) in 23S rRNA + 2 reduced [2Fe-2S]-[ferredoxin] + 2 S-adenosyl-L-methionine = 2-methyladenosine(2503) in 23S rRNA + 5'-deoxyadenosine + L-methionine + 2 oxidized [2Fe-2S]-[ferredoxin] + S-adenosyl-L-homocysteine. The enzyme catalyses adenosine(37) in tRNA + 2 reduced [2Fe-2S]-[ferredoxin] + 2 S-adenosyl-L-methionine = 2-methyladenosine(37) in tRNA + 5'-deoxyadenosine + L-methionine + 2 oxidized [2Fe-2S]-[ferredoxin] + S-adenosyl-L-homocysteine. Functionally, specifically methylates position 2 of adenine 2503 in 23S rRNA and position 2 of adenine 37 in tRNAs. The sequence is that of Probable dual-specificity RNA methyltransferase RlmN from Kineococcus radiotolerans (strain ATCC BAA-149 / DSM 14245 / SRS30216).